Reading from the N-terminus, the 529-residue chain is Cytochrome P450 monooxygenase fsoB (529 aa).

Residues 4–24 (WLLSLLIAGVVFAIFQLRTVG) traverse the membrane as a helical segment. Cys-436 is a heme binding site.

This sequence belongs to the cytochrome P450 family. It depends on heme as a cofactor.

It localises to the membrane. In terms of biological role, cytochrome P450 monooxygenase; part of the gene cluster that mediates the biosynthesis of the enfumafungin-type antibiotic fuscoatroside. Four enzymes are sufficient to produce fuscoatroside: the terpene cyclase-glycosyl transferase fusion protein fsoAthe cytochrome P450 monoxygenases fsoD and fsoE, and the acetyltransferase fsoF; the cytochrome P450 monooxygenase fsoB and the glucose oxidase-like protein fsoC do not seem to play a role in biosynthesis of fuscoatroside. The sequence is that of Cytochrome P450 monooxygenase fsoB from Humicola fuscoatra.